We begin with the raw amino-acid sequence, 88 residues long: Apolipoprotein C-I (88 aa).

The signal sequence occupies residues 1–26 (MRLFISLPVLIVVLAMALEGPAPAQA).

Belongs to the apolipoprotein C1 family.

The protein resides in the secreted. Functionally, inhibitor of lipoprotein binding to the low density lipoprotein (LDL) receptor, LDL receptor-related protein, and very low density lipoprotein (VLDL) receptor. Associates with high density lipoproteins (HDL) and the triacylglycerol-rich lipoproteins in the plasma and makes up about 10% of the protein of the VLDL and 2% of that of HDL. Appears to interfere directly with fatty acid uptake and is also the major plasma inhibitor of cholesteryl ester transfer protein (CETP). Modulates the interaction of APOE with beta-migrating VLDL and inhibits binding of beta-VLDL to the LDL receptor-related protein. Binds free fatty acids and reduces their intracellular esterification. The chain is Apolipoprotein C-I (APOC1) from Myodes glareolus (Bank vole).